The chain runs to 239 residues: 1-(5-phosphoribosyl)-5-[(5-phosphoribosylamino)methylideneamino] imidazole-4-carboxamide isomerase (239 aa).

Catalysis depends on Asp9, which acts as the Proton acceptor. The active-site Proton donor is the Asp131.

This sequence belongs to the HisA/HisF family.

Its subcellular location is the cytoplasm. It catalyses the reaction 1-(5-phospho-beta-D-ribosyl)-5-[(5-phospho-beta-D-ribosylamino)methylideneamino]imidazole-4-carboxamide = 5-[(5-phospho-1-deoxy-D-ribulos-1-ylimino)methylamino]-1-(5-phospho-beta-D-ribosyl)imidazole-4-carboxamide. It functions in the pathway amino-acid biosynthesis; L-histidine biosynthesis; L-histidine from 5-phospho-alpha-D-ribose 1-diphosphate: step 4/9. The polypeptide is 1-(5-phosphoribosyl)-5-[(5-phosphoribosylamino)methylideneamino] imidazole-4-carboxamide isomerase (Bacteroides fragilis (strain ATCC 25285 / DSM 2151 / CCUG 4856 / JCM 11019 / LMG 10263 / NCTC 9343 / Onslow / VPI 2553 / EN-2)).